Consider the following 917-residue polypeptide: Probable dipeptidyl-aminopeptidase B (917 aa).

The span at 1 to 16 shows a compositional bias: basic and acidic residues; that stretch reads MATEKGHGRDDEERVP. Residues 1–21 form a disordered region; sequence MATEKGHGRDDEERVPLTRGS. The Cytoplasmic portion of the chain corresponds to 1-99; that stretch reads MATEKGHGRD…KPMHKSVKIA (99 aa). Residues 100–120 traverse the membrane as a helical; Signal-anchor for type II membrane protein segment; sequence LWTLLFLSLGGWSLAFVLFIF. Residues 121 to 917 lie on the Vacuolar side of the membrane; the sequence is RSHDTYETPI…RAATWAGLSI (797 aa). Residues Asn-135, Asn-351, and Asn-574 are each glycosylated (N-linked (GlcNAc...) asparagine). Ser-756 acts as the Charge relay system in catalysis. The N-linked (GlcNAc...) asparagine glycan is linked to Asn-815. Active-site charge relay system residues include Asp-833 and His-866. Asn-902 carries an N-linked (GlcNAc...) asparagine glycan.

This sequence belongs to the peptidase S9B family.

The protein resides in the vacuole membrane. It carries out the reaction Release of an N-terminal dipeptide, Xaa-Yaa-|-Zaa-, from a polypeptide, preferentially when Yaa is Pro, provided Zaa is neither Pro nor hydroxyproline.. Functionally, type IV dipeptidyl-peptidase which removes N-terminal dipeptides sequentially from polypeptides having unsubstituted N-termini provided that the penultimate residue is proline. In Ajellomyces capsulatus (strain H88) (Darling's disease fungus), this protein is Probable dipeptidyl-aminopeptidase B (DAPB).